Consider the following 339-residue polypeptide: MRLGVLDVGSNTVHLLVVDAYRGGHPTPMSSTKATLRMVEATDSSGKITKRAADKLVSTIGEFAKIAVSSGCAELMAFATSAVREAGNSDDVLSRVRKETGVRLQVLRGVDESRLTFLAVRRWFGWSAGRIINLDIGGGSLELSNGVDEEPEVALSLPLGAGRLTREWLPDDPPGRRRVAMLRDWLDSELSDASVTVLEAGKPDLAVATSKTFRSLARLTGAAPSAAGPRAKRALTVNGLRQLIAFISRMTASDRAELEGISTERAPQIVAGALVAEASMRALSIETVDICPWALREGLILRKLDSEADGTALVQTSVRDTRGQEVDRNAANRSRGDKT.

Positions 315–339 are disordered; that stretch reads QTSVRDTRGQEVDRNAANRSRGDKT. Residues 319 to 339 are compositionally biased toward basic and acidic residues; it reads RDTRGQEVDRNAANRSRGDKT.

Belongs to the GppA/Ppx family. Homodimer.

The enzyme catalyses [phosphate](n) + H2O = [phosphate](n-1) + phosphate + H(+). Functionally, degradation of inorganic polyphosphates (polyP). Releases orthophosphate processively from the ends of the polyP chain. The sequence is that of Exopolyphosphatase 1 from Mycobacterium leprae (strain TN).